Here is a 334-residue protein sequence, read N- to C-terminus: Formamidase (334 aa).

Positions 14-260 (FLVAAIQFPV…WEIVTGEIYP (247 aa)) constitute a CN hydrolase domain. Residue Glu-60 is the Proton acceptor of the active site. Lys-133 functions as the Proton donor in the catalytic mechanism. The Nucleophile role is filled by Cys-166.

This sequence belongs to the carbon-nitrogen hydrolase superfamily. Aliphatic amidase family.

It carries out the reaction formamide + H2O = formate + NH4(+). In terms of biological role, is an aliphatic amidase with a restricted substrate specificity, as it only hydrolyzes formamide. In Helicobacter pylori (strain G27), this protein is Formamidase.